Reading from the N-terminus, the 203-residue chain is Proteasome subunit beta 1 (203 aa).

Residues 1–7 (MTEKLKG) constitute a propeptide, removed in mature form; by autocatalysis. The Nucleophile role is filled by Thr8.

Belongs to the peptidase T1B family. The 20S proteasome core is composed of 14 alpha and 14 beta subunits that assemble into four stacked heptameric rings, resulting in a barrel-shaped structure. The two inner rings, each composed of seven catalytic beta subunits, are sandwiched by two outer rings, each composed of seven alpha subunits. The catalytic chamber with the active sites is on the inside of the barrel. Has a gated structure, the ends of the cylinder being occluded by the N-termini of the alpha-subunits. Is capped at one or both ends by the proteasome regulatory ATPase, PAN.

Its subcellular location is the cytoplasm. The catalysed reaction is Cleavage of peptide bonds with very broad specificity.. Its activity is regulated as follows. The formation of the proteasomal ATPase PAN-20S proteasome complex, via the docking of the C-termini of PAN into the intersubunit pockets in the alpha-rings, triggers opening of the gate for substrate entry. Interconversion between the open-gate and close-gate conformations leads to a dynamic regulation of the 20S proteasome proteolysis activity. Component of the proteasome core, a large protease complex with broad specificity involved in protein degradation. The polypeptide is Proteasome subunit beta 1 (Thermococcus kodakarensis (strain ATCC BAA-918 / JCM 12380 / KOD1) (Pyrococcus kodakaraensis (strain KOD1))).